Reading from the N-terminus, the 204-residue chain is MMRTLITIHPLPLLLLLQQLLQPVQFQEVDTDFDFSEDKKEEFEEYLEQFFSTGPTRPPTKEKVKRRVLIEPGMPLNHIEYCNHEIMGKNVYYKHRCVAEHYFLLMQYDELQNICYNRFVPCKNGIRKCNRSKGLVEGVYCNLTEAFEIPACKYESFYRKGYVLITCAWQNELQKLIPHTINDLVEPSEHRSFLSEDGVFVIPP.

The N-terminal stretch at 1–26 (MMRTLITIHPLPLLLLLQQLLQPVQF) is a signal peptide. 3 disulfides stabilise this stretch: cysteine 97/cysteine 152, cysteine 115/cysteine 167, and cysteine 122/cysteine 129. N-linked (GlcNAc...) asparagine glycans are attached at residues asparagine 130 and asparagine 142.

It belongs to the pancreatic ribonuclease family.

The protein resides in the secreted. Its function is as follows. Does not exhibit any ribonuclease activity. The chain is Inactive ribonuclease-like protein 9 (RNASE9) from Symphalangus syndactylus (Siamang).